The sequence spans 642 residues: 1-deoxy-D-xylulose-5-phosphate synthase (642 aa).

Thiamine diphosphate-binding positions include H79 and 120–122 (GHS). Residue D151 participates in Mg(2+) binding. Residues 152-153 (GS), N180, Y290, and E372 contribute to the thiamine diphosphate site. N180 is a binding site for Mg(2+).

This sequence belongs to the transketolase family. DXPS subfamily. Homodimer. The cofactor is Mg(2+). Thiamine diphosphate is required as a cofactor.

The catalysed reaction is D-glyceraldehyde 3-phosphate + pyruvate + H(+) = 1-deoxy-D-xylulose 5-phosphate + CO2. Its pathway is metabolic intermediate biosynthesis; 1-deoxy-D-xylulose 5-phosphate biosynthesis; 1-deoxy-D-xylulose 5-phosphate from D-glyceraldehyde 3-phosphate and pyruvate: step 1/1. Catalyzes the acyloin condensation reaction between C atoms 2 and 3 of pyruvate and glyceraldehyde 3-phosphate to yield 1-deoxy-D-xylulose-5-phosphate (DXP). The polypeptide is 1-deoxy-D-xylulose-5-phosphate synthase (Rhodospirillum centenum (strain ATCC 51521 / SW)).